A 347-amino-acid polypeptide reads, in one-letter code: Phenylalanine--tRNA ligase alpha subunit (347 aa).

Residue E261 coordinates Mg(2+).

Belongs to the class-II aminoacyl-tRNA synthetase family. Phe-tRNA synthetase alpha subunit type 1 subfamily. Tetramer of two alpha and two beta subunits. The cofactor is Mg(2+).

Its subcellular location is the cytoplasm. It carries out the reaction tRNA(Phe) + L-phenylalanine + ATP = L-phenylalanyl-tRNA(Phe) + AMP + diphosphate + H(+). In Streptococcus uberis (strain ATCC BAA-854 / 0140J), this protein is Phenylalanine--tRNA ligase alpha subunit.